Consider the following 476-residue polypeptide: uncharacterized protein (476 aa).

The next 10 membrane-spanning stretches (helical) occupy residues 4 to 24 (FFSF…LFGA), 81 to 101 (ALAI…AAFI), 141 to 161 (WMGV…FSGV), 174 to 194 (FDFP…LAIT), 207 to 227 (FVPL…VMNI), 233 to 253 (VIWS…GAAG), 300 to 320 (MIGI…LILL), 351 to 371 (FVTL…YIYA), 391 to 411 (ICTF…MWQL), and 414 to 434 (IIMA…SPVV).

This sequence belongs to the alanine or glycine:cation symporter (AGCS) (TC 2.A.25) family.

It localises to the cell inner membrane. This is an uncharacterized protein from Escherichia coli (strain K12).